Reading from the N-terminus, the 91-residue chain is Small ribosomal subunit protein uS19 (91 aa).

This sequence belongs to the universal ribosomal protein uS19 family.

Its function is as follows. Protein S19 forms a complex with S13 that binds strongly to the 16S ribosomal RNA. The polypeptide is Small ribosomal subunit protein uS19 (Paraburkholderia phymatum (strain DSM 17167 / CIP 108236 / LMG 21445 / STM815) (Burkholderia phymatum)).